Consider the following 133-residue polypeptide: Large ribosomal subunit protein bL20 (133 aa).

This sequence belongs to the bacterial ribosomal protein bL20 family.

Functionally, binds directly to 23S ribosomal RNA and is necessary for the in vitro assembly process of the 50S ribosomal subunit. It is not involved in the protein synthesizing functions of that subunit. The protein is Large ribosomal subunit protein bL20 of Bartonella henselae (strain ATCC 49882 / DSM 28221 / CCUG 30454 / Houston 1) (Rochalimaea henselae).